Consider the following 451-residue polypeptide: MEKKYFGTDGIRGKVGERPITPDFILHLGWAVGRVLAQGRQSKVLIGKDTRISGYMFESALQAGLSAAGVDIRLLGPMPTPAIAYLTRTLHAKAGIVISASHNPYYDNGIKFFSSAGTKLPDEIEVAIEAELEKPMQTATSSRLGKAERVVDAAGRYIEFCKSTGPASVDLSELRLVLDCAHGATYQVAPEVFAEMGADITVIGASPNGLNINENCGSTALESLQHKVLECKADVGIALDGDGDRVIMIDQRGEIVDGDDILYIIARARQRTSKLTGAVVGTLMSNLGLEKALATLGIPLMRSQVGDRYVLEMLQCNGYSLGGESSGHIICLDRTTTGDGIVSALQVLVEMVATGHSLYELKSGVVKYPQCLINVQVARSINLHDNNAIINAMQEAENQLGDEGRVLLRPSGTEPVVRVMVEGRDISQVNSLAQQLAQEVAFHLGNPQICP.

The active-site Phosphoserine intermediate is serine 101. 4 residues coordinate Mg(2+): serine 101, aspartate 240, aspartate 242, and aspartate 244. Serine 101 bears the Phosphoserine mark.

Belongs to the phosphohexose mutase family. Mg(2+) serves as cofactor. In terms of processing, activated by phosphorylation.

The enzyme catalyses alpha-D-glucosamine 1-phosphate = D-glucosamine 6-phosphate. Catalyzes the conversion of glucosamine-6-phosphate to glucosamine-1-phosphate. The chain is Phosphoglucosamine mutase from Nitrosococcus oceani (strain ATCC 19707 / BCRC 17464 / JCM 30415 / NCIMB 11848 / C-107).